The following is a 426-amino-acid chain: Phosphomethylpyrimidine synthase (426 aa).

Substrate is bound by residues Asn65, Met94, Tyr123, His162, 184-186 (SRG), 225-228 (DGLR), and Glu264. His268 is a Zn(2+) binding site. Residue Tyr291 participates in substrate binding. Position 332 (His332) interacts with Zn(2+). Residues Cys409, Cys412, and Cys416 each contribute to the [4Fe-4S] cluster site.

It belongs to the ThiC family. It depends on [4Fe-4S] cluster as a cofactor.

The catalysed reaction is 5-amino-1-(5-phospho-beta-D-ribosyl)imidazole + S-adenosyl-L-methionine = 4-amino-2-methyl-5-(phosphooxymethyl)pyrimidine + CO + 5'-deoxyadenosine + formate + L-methionine + 3 H(+). It functions in the pathway cofactor biosynthesis; thiamine diphosphate biosynthesis. Catalyzes the synthesis of the hydroxymethylpyrimidine phosphate (HMP-P) moiety of thiamine from aminoimidazole ribotide (AIR) in a radical S-adenosyl-L-methionine (SAM)-dependent reaction. The protein is Phosphomethylpyrimidine synthase of Thermodesulfovibrio yellowstonii (strain ATCC 51303 / DSM 11347 / YP87).